The sequence spans 1302 residues: MPKIVLNGVTVDFPFQPYKCQQEYMTKVLECLQQKVNGILESHTGTGKTLCLLCTTLAWREHLRDGISARKIAERVQGELFPDRALSSWGNAAAAAAGDPIACYTDIPKIIYASRTHSQLTQVINELRNTSYRPKVCVLGSREQLCIHPEVKKQESNHIQIHLCRKKVASRSCHFYNNVEEKSLEQELASPILDIEDLVKSGSKHRVCPYYLSRNLKQQADIIFMPYNYLLDAKSRRAHNIDLKGTVVIFDEAHNVEKMCEESASFDLTPHDLASGLDIIDQVLEEQTKTAQQGEPHPEFSADSTSPGLNMELEDIAKLKMILLRLEGAIDAVELPGDDSGVTKPGSYIFELFAEAQITFQTKVCILDSLDQIIQHLAGRAGVFTNTAGLQKLADIIQIVFSVDPSEGGPGSLAGLGALQSYKVHIHPDAGHRQTAQRSDAWSTTAARKRGKVLSYWCFSPGLSMRELVRQGVRSLILTSGTLAPVSSFALEMQIPFPVCLENPHIIDKHQIWVGVVPRGPDGAQLSSAFDRRFSEECLSSLGKALGNTARVVPCGLLIFFPSYPVMEKSLEFWRARDLARKMEALKPLFVEPRSKGSFSETISAYYARVAAPGSTGATFLAVCRGKASEGLDFSDTNGRGVIVTGLPYPPRMDPRVVLKMQFLDEMKGQGGAGGQFLSGQEWYRQQASRAVNQAIGRVIRHRQDYGAVFLCDHRFAFADARAQLPSWVRPHVRVYDNFGHVIRDVAQFFRVAERTMPAPAPRATAPSVREGEDAVREVKSPGPLFSTRKAKSLDLHVPSLKQRSSGSAAAGDPESSLCVEYEQEPIPARQRPRGLLAALEHSEQQAGSPGEEQAHSCSTLFLLSAKRPAEEPRGGRKKIRLVSHPEEPVAGAQTDRAKLYMVAVKQELSQANFATFTQALQDYKGSDDFAALAACLGPLFAEDPKKHSLLQGFYQFVRPHHKQQFEEVCIQLTGRGCGYRPEHSIPRRQPAQPVLDPTGRTAPDPKLTLSKAAAQQLDPREHLNQGRPHLSPRPPPTGDPGSHPQWRSGVPRAGKQGQRAVSAYLADARRALGSAGCSQLLAALRAYKQDDDLDKVLAVLAALTTAKPEDFPLLHRFSMFVRPHHKQRFSQTCTDLTGRPYPGMERPGPQEESLVVPPVLTHGAPQPGPSRSEKPGKTQSKISSLLRQRPAGTVGAGSEDAGPSQSPGPPHGPAASEWGEPHGRDIAGQQAAGAPGGPLSAGCVCQGCGAEDVVPFQCPACDFQRCQACWQRHLQASRMCPACHTASRKQSVTQVFWPEPQ.

Residues Asn-7–His-297 form the Helicase ATP-binding domain. An ATP-binding site is contributed by Ser-42 to Thr-49. [4Fe-4S] cluster contacts are provided by Cys-146, Cys-164, Cys-173, and Cys-208. Residues Lys-152–Val-168 carry the Nuclear localization signal motif. The DEAH box motif lies at Asp-251 to His-254. Positions Pro-758–Pro-767 are enriched in low complexity. The interval Pro-758–Cys-819 is disordered. Residues Arg-770–Lys-780 show a composition bias toward basic and acidic residues. The Nuclear localization signal signature appears at Pro-873 to Lys-879. Disordered regions lie at residues Arg-981–Pro-1006, Asp-1019–Gly-1058, Cys-1134–Glu-1153, and Val-1160–Gly-1234. The span at Lys-1178 to Leu-1187 shows a compositional bias: polar residues. The PIP-box signature appears at Gln-1180–Leu-1187.

Belongs to the helicase family. RAD3/XPD subfamily. Interacts with TERF1. Interacts (via PIP-box) with PCNA; the interaction is direct and essential for suppressing telomere fragility. Interacts with MMS19; the interaction mediates the association of RTEL1 with the cytosolic iron-sulfur protein assembly (CIA) complex.

The protein resides in the nucleus. The enzyme catalyses ATP + H2O = ADP + phosphate + H(+). Functionally, a probable ATP-dependent DNA helicase implicated in telomere-length regulation, DNA repair and the maintenance of genomic stability. Acts as an anti-recombinase to counteract toxic recombination and limit crossover during meiosis. Regulates meiotic recombination and crossover homeostasis by physically dissociating strand invasion events and thereby promotes noncrossover repair by meiotic synthesis dependent strand annealing (SDSA) as well as disassembly of D loop recombination intermediates. Also disassembles T loops and prevents telomere fragility by counteracting telomeric G4-DNA structures, which together ensure the dynamics and stability of the telomere. In Pongo abelii (Sumatran orangutan), this protein is Regulator of telomere elongation helicase 1.